The following is a 568-amino-acid chain: Delta 8-(E)-sphingolipid desaturase (568 aa).

In terms of domain architecture, Cytochrome b5 heme-binding spans 2 to 77 (DNIISRGEIE…FRKWRIGRID (76 aa)). Residues H37 and H60 each contribute to the heme site. A run of 2 helical transmembrane segments spans residues 241 to 261 (FWSAFSMGCAWQQLVFIAHDA) and 272 to 292 (LDNIFGMIIASWVGGLSLGWW). The short motif at 259-263 (HDAGH) is the Histidine box-1 element. A Histidine box-2 motif is present at residues 296 to 300 (HNVHH). Helical transmembrane passes span 352–377 (YLYYPMLAFGRFNLYRLSWMHVLLGL), 389–409 (YFELCGLIFFNYWFFYLLVGC), and 421–441 (IMVSHITTMLVHVQITLSHFA). The short motif at 480-484 (QVVHH) is the Histidine box-3 element. Positions 549–560 (ATGEREADEKTY) are enriched in basic and acidic residues. A disordered region spans residues 549–568 (ATGEREADEKTYRTKSIKNA).

Belongs to the fatty acid desaturase type 1 family.

It localises to the membrane. The catalysed reaction is an N-acylsphing-4-enine + 2 Fe(II)-[cytochrome b5] + O2 + 2 H(+) = a (4E,8E)-4-sphinga-4,8-dienine ceramide + 2 Fe(III)-[cytochrome b5] + 2 H2O. It participates in lipid metabolism; sphingolipid metabolism. Delta(8)-fatty-acid desaturase which introduces a double bond at the 8-position in the long-chain base (LCB) of ceramides. Required for the formation of the di-unsaturated sphingoid base (E,E)-sphinga-4,8-dienine during glucosylceramide (GluCer) biosynthesis. The sequence is that of Delta 8-(E)-sphingolipid desaturase from Lachancea kluyveri (strain ATCC 58438 / CBS 3082 / BCRC 21498 / NBRC 1685 / JCM 7257 / NCYC 543 / NRRL Y-12651) (Yeast).